Reading from the N-terminus, the 69-residue chain is DNA gyrase inhibitor YacG (69 aa).

Zn(2+)-binding residues include Cys-7, Cys-10, Cys-26, and Cys-30.

This sequence belongs to the DNA gyrase inhibitor YacG family. Interacts with GyrB. Requires Zn(2+) as cofactor.

Functionally, inhibits all the catalytic activities of DNA gyrase by preventing its interaction with DNA. Acts by binding directly to the C-terminal domain of GyrB, which probably disrupts DNA binding by the gyrase. In Shewanella baltica (strain OS155 / ATCC BAA-1091), this protein is DNA gyrase inhibitor YacG.